The chain runs to 242 residues: Probable septum site-determining protein MinC (242 aa).

The protein belongs to the MinC family. As to quaternary structure, interacts with MinD and FtsZ.

Cell division inhibitor that blocks the formation of polar Z ring septums. Rapidly oscillates between the poles of the cell to destabilize FtsZ filaments that have formed before they mature into polar Z rings. Prevents FtsZ polymerization. This Buchnera aphidicola subsp. Schizaphis graminum (strain Sg) protein is Probable septum site-determining protein MinC.